Reading from the N-terminus, the 213-residue chain is Pyrrolidone-carboxylate peptidase (213 aa).

Active-site residues include Glu-78, Cys-141, and His-165.

It belongs to the peptidase C15 family. In terms of assembly, homotetramer.

It is found in the cytoplasm. The enzyme catalyses Release of an N-terminal pyroglutamyl group from a polypeptide, the second amino acid generally not being Pro.. Functionally, removes 5-oxoproline from various penultimate amino acid residues except L-proline. The sequence is that of Pyrrolidone-carboxylate peptidase from Staphylococcus carnosus (strain TM300).